The sequence spans 329 residues: MWKRNLLLLILLHIGAFLFPFLTVSKEKLTPERIAVALALLAVVLMSEALSIYLIFKRRGLRLREGLIWILELKEIEYAKLSEEERDLAVKFGYIIIGFPAAGLMLCGAVLEWGDLALAFKFPIIFFAFIVPLLQLCLFPLVVLFYTYNRFLKNDLAASANFSVFWAKLSIAGLVLVLLSLMLVKSEVLPFVKTITAHRTAFILAPLFNIFVGALQYLMAKTGSRELMVTFSIVLFASPLLSFALLLELLGAYSLQESLKFALIGVSVIFLAMFAATWVVLRLFGYSFDTLQRAVEEARVEGPILFWLFWVNAAIVGIGIFFVIRILTF.

9 helical membrane passes run 5–24, 34–56, 92–114, 124–146, 159–181, 196–218, 231–253, 263–285, and 306–328; these read NLLL…FLTV, IAVA…YLIF, FGYI…LEWG, IIFF…VLFY, SANF…LLSL, TAHR…LQYL, FSIV…LGAY, LIGV…RLFG, and FWLF…RILT.

The protein resides in the cell membrane. This is an uncharacterized protein from Archaeoglobus fulgidus (strain ATCC 49558 / DSM 4304 / JCM 9628 / NBRC 100126 / VC-16).